We begin with the raw amino-acid sequence, 231 residues long: Urease accessory protein UreF (231 aa).

This sequence belongs to the UreF family. UreD, UreF and UreG form a complex that acts as a GTP-hydrolysis-dependent molecular chaperone, activating the urease apoprotein by helping to assemble the nickel containing metallocenter of UreC. The UreE protein probably delivers the nickel.

The protein resides in the cytoplasm. Functionally, required for maturation of urease via the functional incorporation of the urease nickel metallocenter. This Magnetococcus marinus (strain ATCC BAA-1437 / JCM 17883 / MC-1) protein is Urease accessory protein UreF.